Reading from the N-terminus, the 135-residue chain is Small ribosomal subunit protein bS6 (135 aa).

Residues 98 to 135 (EASPMAKAKDERDARRAAISERSSEADEVEENAEESAE) are disordered. The span at 104 to 122 (KAKDERDARRAAISERSSE) shows a compositional bias: basic and acidic residues. The segment covering 123–135 (ADEVEENAEESAE) has biased composition (acidic residues).

It belongs to the bacterial ribosomal protein bS6 family.

Its function is as follows. Binds together with bS18 to 16S ribosomal RNA. The sequence is that of Small ribosomal subunit protein bS6 from Shewanella amazonensis (strain ATCC BAA-1098 / SB2B).